A 382-amino-acid chain; its full sequence is MATTSLASAFCSMKAVMLARDGRGMKPRSSDLQLRAGNAPTSLKMINGTKFSYTESLKRLPDWSMLFAVITTIFSAAEKQWTNLEWKPKPKLPQLLDDHFGLHGLVFRRTFAIRSYEVGPDRSTSILAVMNHMQEATLNHAKSVGILGDGFGTTLEMSKRDLMWVVRRTHVAVERYPTWGDTVEVECWIGASGNNGMRRDFLVRDCKTGEILTRCTSLSVLMNTRTRRLSTIPDEVRGEIGPAFIDNVAVKDDEIKKLQKLNDSTADYIQGGLTPRWNDLDVNQHVNNLKYVAWVFETVPDSIFESHHISSFTLEYRRECTRDSVLRSLTTVSGGSSEAGLVCDHLLQLEGGSEVLRARTEWRPKLTDSFRGISVIPAEPRV.

Residues methionine 1–asparagine 83 constitute a chloroplast transit peptide. Catalysis depends on residues asparagine 283, histidine 285, and cysteine 320.

This sequence belongs to the acyl-ACP thioesterase family. Forms homodimers. Expressed in developing cotyledons. Not detected in leaves.

The protein localises to the plastid. It localises to the chloroplast. The catalysed reaction is dodecanoyl-[ACP] + H2O = dodecanoate + holo-[ACP] + H(+). Its function is as follows. Plays an essential role in chain termination during de novo fatty acid synthesis. High thioesterase activity for lauroyl-ACP versus other acyl-ACPs. This is Dodecanoyl-[acyl-carrier-protein] hydrolase, chloroplastic from Umbellularia californica (California bay laurel).